Consider the following 384-residue polypeptide: Cytochrome b (384 aa).

The next 4 membrane-spanning stretches (helical) occupy residues 32-52, 75-96, 111-131, and 176-196; these read FGSL…FLSM, FLLR…YFHI, WRVG…GYVL, and FFSL…VHLI. Residues His-81 and His-95 each coordinate heme b. Heme b-binding residues include His-180 and His-194. Residue His-199 participates in a ubiquinone binding. 4 consecutive transmembrane segments (helical) span residues 224–244, 286–306, 318–338, and 345–366; these read SKDW…VYLM, FGGV…PLLH, FGRM…WIGS, and FIII…LIPL.

It belongs to the cytochrome b family. The main subunits of complex b-c1 are: cytochrome b, cytochrome c1 and the Rieske protein. Requires heme b as cofactor.

It is found in the mitochondrion inner membrane. Functionally, component of the ubiquinol-cytochrome c reductase complex (complex III or cytochrome b-c1 complex) that is part of the mitochondrial respiratory chain. The b-c1 complex mediates electron transfer from ubiquinol to cytochrome c. Contributes to the generation of a proton gradient across the mitochondrial membrane that is then used for ATP synthesis. In Acropora tenuis (Purple tipped acropora), this protein is Cytochrome b (MT-CYB).